Consider the following 142-residue polypeptide: Hemoglobin subunit theta-1 (142 aa).

A Globin domain is found at 2 to 142 (ALAAADRATV…VISALASDCR (141 aa)). Positions 59 and 88 each coordinate heme b.

Belongs to the globin family.

This Equus caballus (Horse) protein is Hemoglobin subunit theta-1 (HBQ1).